A 291-amino-acid chain; its full sequence is Omega-amidase NIT3 (291 aa).

The CN hydrolase domain maps to 11 to 264 (IKVALVQLSG…EEIIYAELDP (254 aa)). Threonine 34 is subject to Phosphothreonine. Residue glutamate 53 is the Proton acceptor of the active site. The active-site Proton donor is the lysine 128. The active-site Nucleophile is the cysteine 169.

The protein belongs to the carbon-nitrogen hydrolase superfamily. NIT1/NIT2 family. As to quaternary structure, homodimer.

It carries out the reaction a monoamide of a dicarboxylate + H2O = a dicarboxylate + NH4(+). In terms of biological role, possesses omega-amidase activity. The role of omega-amidase is to remove potentially toxic intermediates by converting 2-oxoglutaramate and 2-oxosuccinamate to biologically useful 2-oxoglutarate and oxaloacetate, respectively. The polypeptide is Omega-amidase NIT3 (NIT3) (Saccharomyces cerevisiae (strain ATCC 204508 / S288c) (Baker's yeast)).